Consider the following 186-residue polypeptide: Spermidine N(1)-acetyltransferase (186 aa).

In terms of domain architecture, N-acetyltransferase spans 7–167 (VKLRPLERED…NAIRMCIFQH (161 aa)). Residues Met-30, Glu-35, Glu-43, and 51-54 (HIHD) each bind spermine. Glu-35 provides a ligand contact to Mg(2+). Spermidine is bound by residues Glu-35 and Glu-43. Glu-76 provides a ligand contact to Mg(2+). A spermine-binding site is contributed by 85 to 87 (EFQ). Acetyl-CoA contacts are provided by residues 88–90 (III), 95–101 (QGKGLAT), and 128–137 (NEKAIHIYRK). Tyr-135 serves as the catalytic Proton donor.

Belongs to the acetyltransferase family. As to quaternary structure, homododecamer.

Its subcellular location is the cytoplasm. It carries out the reaction an alkane-alpha,omega-diamine + acetyl-CoA = an N-acetylalkane-alpha,omega-diamine + CoA + H(+). The enzyme catalyses spermidine + acetyl-CoA = N(1)-acetylspermidine + CoA + H(+). It catalyses the reaction spermidine + acetyl-CoA = N(8)-acetylspermidine + CoA + H(+). The catalysed reaction is spermine + acetyl-CoA = N(1)-acetylspermine + CoA + H(+). It functions in the pathway amine and polyamine degradation; spermidine degradation. It participates in amine and polyamine degradation; spermine degradation. Functionally, involved in the protection against polyamine toxicity by regulating their concentration. Catalyzes the transfer of an acetyl group from acetyl coenzyme A (AcCoA) to the primary amino groups of spermidine to yield N(1)- and N(8)-acetylspermidine. It can also use spermine. The chain is Spermidine N(1)-acetyltransferase (speG) from Escherichia coli O157:H7.